Here is a 283-residue protein sequence, read N- to C-terminus: uncharacterized protein (283 aa).

Positions 3–79 (TGGLAIIQSM…MRVAGDLAKP (77 aa)) constitute an HTH rpiR-type domain. Positions 39 to 58 (VNEISALANSSDAAVIRLCK) form a DNA-binding region, H-T-H motif. The 142-residue stretch at 123–264 (AVSLLLKAHT…FLGMAAEQYE (142 aa)) folds into the SIS domain.

This is an uncharacterized protein from Bacillus subtilis (strain 168).